We begin with the raw amino-acid sequence, 355 residues long: Isopentenyl-diphosphate delta-isomerase (355 aa).

Substrate is bound at residue 9–10 (RK). FMN-binding positions include 67–69 (AIT), S97, and N125. 97–99 (SQR) contacts substrate. Residue Q161 coordinates substrate. E162 lines the Mg(2+) pocket. Residues K197, T227, 276–278 (GIR), and 297–298 (AL) each bind FMN.

This sequence belongs to the IPP isomerase type 2 family. Homooctamer. Dimer of tetramers. It depends on FMN as a cofactor. NADPH serves as cofactor. Mg(2+) is required as a cofactor.

Its subcellular location is the cytoplasm. The catalysed reaction is isopentenyl diphosphate = dimethylallyl diphosphate. Its function is as follows. Involved in the biosynthesis of isoprenoids. Catalyzes the 1,3-allylic rearrangement of the homoallylic substrate isopentenyl (IPP) to its allylic isomer, dimethylallyl diphosphate (DMAPP). This is Isopentenyl-diphosphate delta-isomerase from Methanococcus maripaludis (strain DSM 14266 / JCM 13030 / NBRC 101832 / S2 / LL).